The sequence spans 802 residues: Leucine--tRNA ligase (802 aa).

Residues 40–51 (PYPSGAGLHVGH) carry the 'HIGH' region motif. The 'KMSKS' region motif lies at 576–580 (KMSKS). ATP is bound at residue K579.

This sequence belongs to the class-I aminoacyl-tRNA synthetase family.

The protein resides in the cytoplasm. The catalysed reaction is tRNA(Leu) + L-leucine + ATP = L-leucyl-tRNA(Leu) + AMP + diphosphate. This Bacillus cytotoxicus (strain DSM 22905 / CIP 110041 / 391-98 / NVH 391-98) protein is Leucine--tRNA ligase.